The chain runs to 253 residues: Dehydration-responsive element-binding protein 1D (253 aa).

The segment covering 1-22 has biased composition (polar residues); the sequence is MEKNTAASGQLMTSSAEATPSS. Residues 1–31 are disordered; the sequence is MEKNTAASGQLMTSSAEATPSSPKRPAGRTK. Positions 39 to 98 form a DNA-binding region, AP2/ERF; it reads VFRGVRWRGCAGRWVCKVRVPGSRGDRFWIGTSDTAEETARTHDAAMLALCGASASLNFA. Positions 131–153 are disordered; that stretch reads RRVPAPGRGSTATATATSGDAAS. Low complexity predominate over residues 134–153; that stretch reads PAPGRGSTATATATSGDAAS.

It belongs to the AP2/ERF transcription factor family. ERF subfamily.

It localises to the nucleus. Its function is as follows. Transcriptional activator that binds specifically to the DNA sequence 5'-[AG]CCGAC-3'. Binding to the C-repeat/DRE element mediates high salinity- and dehydration-inducible transcription. This is Dehydration-responsive element-binding protein 1D (DREB1D) from Oryza sativa subsp. indica (Rice).